A 131-amino-acid chain; its full sequence is Small ribosomal subunit protein uS8 (131 aa).

It belongs to the universal ribosomal protein uS8 family. Part of the 30S ribosomal subunit. Contacts proteins S5 and S12.

Functionally, one of the primary rRNA binding proteins, it binds directly to 16S rRNA central domain where it helps coordinate assembly of the platform of the 30S subunit. This chain is Small ribosomal subunit protein uS8, found in Bacteroides fragilis (strain ATCC 25285 / DSM 2151 / CCUG 4856 / JCM 11019 / LMG 10263 / NCTC 9343 / Onslow / VPI 2553 / EN-2).